We begin with the raw amino-acid sequence, 220 residues long: Uracil-DNA glycosylase (220 aa).

Asp-65 (proton acceptor) is an active-site residue.

It belongs to the uracil-DNA glycosylase (UDG) superfamily. UNG family.

The protein localises to the cytoplasm. The enzyme catalyses Hydrolyzes single-stranded DNA or mismatched double-stranded DNA and polynucleotides, releasing free uracil.. Its function is as follows. Excises uracil residues from the DNA which can arise as a result of misincorporation of dUMP residues by DNA polymerase or due to deamination of cytosine. The polypeptide is Uracil-DNA glycosylase (Azobacteroides pseudotrichonymphae genomovar. CFP2).